Consider the following 165-residue polypeptide: Interferon gamma (165 aa).

An N-terminal signal peptide occupies residues 1–23 (MKYTSYILAFQLCIVLGSLGCYC). Q24 carries the post-translational modification Pyrrolidone carboxylic acid. N48 and N120 each carry an N-linked (GlcNAc...) asparagine glycan.

This sequence belongs to the type II (or gamma) interferon family. As to quaternary structure, homodimer. Interacts with IFNGR1 (via extracellular domain); this interaction promotes IFNGR1 dimerization. Released primarily from activated T lymphocytes.

It is found in the secreted. Its function is as follows. Type II interferon produced by immune cells such as T-cells and NK cells that plays crucial roles in antimicrobial, antiviral, and antitumor responses by activating effector immune cells and enhancing antigen presentation. Primarily signals through the JAK-STAT pathway after interaction with its receptor IFNGR1 to affect gene regulation. Upon IFNG binding, IFNGR1 intracellular domain opens out to allow association of downstream signaling components JAK2, JAK1 and STAT1, leading to STAT1 activation, nuclear translocation and transcription of IFNG-regulated genes. Many of the induced genes are transcription factors such as IRF1 that are able to further drive regulation of a next wave of transcription. Plays a role in class I antigen presentation pathway by inducing a replacement of catalytic proteasome subunits with immunoproteasome subunits. In turn, increases the quantity, quality, and repertoire of peptides for class I MHC loading. Increases the efficiency of peptide generation also by inducing the expression of activator PA28 that associates with the proteasome and alters its proteolytic cleavage preference. Up-regulates as well MHC II complexes on the cell surface by promoting expression of several key molecules such as cathepsins B/CTSB, H/CTSH, and L/CTSL. Participates in the regulation of hematopoietic stem cells during development and under homeostatic conditions by affecting their development, quiescence, and differentiation. The polypeptide is Interferon gamma (IFNG) (Macaca fascicularis (Crab-eating macaque)).